Here is a 58-residue protein sequence, read N- to C-terminus: Gigasin-4 (58 aa).

Component of the organic matrix of calcified shell layers.

The chain is Gigasin-4 from Magallana gigas (Pacific oyster).